Consider the following 20-residue polypeptide: Brevinin-1ITb (20 aa).

M8 is modified (methionine sulfoxide; partial). C14 and C20 are oxidised to a cystine.

It belongs to the frog skin active peptide (FSAP) family. Brevinin subfamily. Expressed by the skin glands.

It localises to the secreted. In terms of biological role, antimicrobial peptide. The chain is Brevinin-1ITb from Rana italica (Italian stream frog).